Consider the following 176-residue polypeptide: Shikimate kinase (176 aa).

Residue glycine 14–threonine 19 participates in ATP binding. Residue serine 18 participates in Mg(2+) binding. Substrate is bound by residues aspartate 36, arginine 60, and glycine 83. Residue arginine 121 participates in ATP binding. Residue arginine 140 coordinates substrate.

Belongs to the shikimate kinase family. As to quaternary structure, monomer. Mg(2+) is required as a cofactor.

Its subcellular location is the cytoplasm. It catalyses the reaction shikimate + ATP = 3-phosphoshikimate + ADP + H(+). Its pathway is metabolic intermediate biosynthesis; chorismate biosynthesis; chorismate from D-erythrose 4-phosphate and phosphoenolpyruvate: step 5/7. Catalyzes the specific phosphorylation of the 3-hydroxyl group of shikimic acid using ATP as a cosubstrate. The chain is Shikimate kinase from Francisella philomiragia subsp. philomiragia (strain ATCC 25017 / CCUG 19701 / FSC 153 / O#319-036).